The primary structure comprises 341 residues: Ferrochelatase (341 aa).

The Fe cation site is built by His-210 and Glu-291.

The protein belongs to the ferrochelatase family.

The protein localises to the cytoplasm. The catalysed reaction is heme b + 2 H(+) = protoporphyrin IX + Fe(2+). Its pathway is porphyrin-containing compound metabolism; protoheme biosynthesis; protoheme from protoporphyrin-IX: step 1/1. Functionally, catalyzes the ferrous insertion into protoporphyrin IX. The polypeptide is Ferrochelatase (Alcanivorax borkumensis (strain ATCC 700651 / DSM 11573 / NCIMB 13689 / SK2)).